Reading from the N-terminus, the 834-residue chain is Periplasmic nitrate reductase (834 aa).

A signal peptide (tat-type signal) is located at residues 1-32 (MTEPKIDRRQLLKLEAAAIAAAAAGMPTVARA). The 4Fe-4S Mo/W bis-MGD-type domain occupies 44 to 100 (LKWDKAACRFCGTGCSVMVATKDNRVVATHGDIKAEVNRGLNCVKGYFLSKIMYGHD). [4Fe-4S] cluster-binding residues include C51, C54, C58, and C86. Mo-bis(molybdopterin guanine dinucleotide) is bound by residues K88, Q155, N180, C184, 217 to 224 (WGSNMAEM), 248 to 252 (STFEH), 267 to 269 (QTD), M378, Q382, N488, 514 to 515 (SD), K537, D564, and 724 to 733 (TGRVVEHWHS). Residue W800 participates in substrate binding. The Mo-bis(molybdopterin guanine dinucleotide) site is built by N808 and K825.

This sequence belongs to the prokaryotic molybdopterin-containing oxidoreductase family. NasA/NapA/NarB subfamily. In terms of assembly, component of the periplasmic nitrate reductase NapAB complex composed of NapA and NapB. [4Fe-4S] cluster is required as a cofactor. Requires Mo-bis(molybdopterin guanine dinucleotide) as cofactor. Predicted to be exported by the Tat system. The position of the signal peptide cleavage has not been experimentally proven.

The protein resides in the periplasm. It catalyses the reaction 2 Fe(II)-[cytochrome] + nitrate + 2 H(+) = 2 Fe(III)-[cytochrome] + nitrite + H2O. Functionally, catalytic subunit of the periplasmic nitrate reductase complex NapAB. Receives electrons from NapB and catalyzes the reduction of nitrate to nitrite. This chain is Periplasmic nitrate reductase, found in Bradyrhizobium sp. (strain ORS 278).